The following is a 340-amino-acid chain: Probable dual-specificity RNA methyltransferase RlmN (340 aa).

The active-site Proton acceptor is glutamate 91. A Radical SAM core domain is found at 97–326 (HSGRVTACIS…CEIRKEKGTD (230 aa)). A disulfide bond links cysteine 104 and cysteine 331. Cysteine 111, cysteine 115, and cysteine 118 together coordinate [4Fe-4S] cluster. Residues 158 to 159 (GE), serine 190, 213 to 215 (SLH), and asparagine 289 contribute to the S-adenosyl-L-methionine site. The active-site S-methylcysteine intermediate is the cysteine 331.

This sequence belongs to the radical SAM superfamily. RlmN family. [4Fe-4S] cluster serves as cofactor.

The protein resides in the cytoplasm. The catalysed reaction is adenosine(2503) in 23S rRNA + 2 reduced [2Fe-2S]-[ferredoxin] + 2 S-adenosyl-L-methionine = 2-methyladenosine(2503) in 23S rRNA + 5'-deoxyadenosine + L-methionine + 2 oxidized [2Fe-2S]-[ferredoxin] + S-adenosyl-L-homocysteine. It catalyses the reaction adenosine(37) in tRNA + 2 reduced [2Fe-2S]-[ferredoxin] + 2 S-adenosyl-L-methionine = 2-methyladenosine(37) in tRNA + 5'-deoxyadenosine + L-methionine + 2 oxidized [2Fe-2S]-[ferredoxin] + S-adenosyl-L-homocysteine. Specifically methylates position 2 of adenine 2503 in 23S rRNA and position 2 of adenine 37 in tRNAs. The chain is Probable dual-specificity RNA methyltransferase RlmN from Thermosipho melanesiensis (strain DSM 12029 / CIP 104789 / BI429).